A 327-amino-acid polypeptide reads, in one-letter code: UDP-glucose 4-epimerase (327 aa).

Threonine 119 contacts substrate. Tyrosine 143 (proton acceptor) is an active-site residue.

It belongs to the NAD(P)-dependent epimerase/dehydratase family. NAD(+) serves as cofactor.

It catalyses the reaction UDP-alpha-D-glucose = UDP-alpha-D-galactose. The protein operates within carbohydrate metabolism; galactose metabolism. It participates in glycan metabolism; exopolysaccharide biosynthesis. In Rhizobium leguminosarum bv. trifolii, this protein is UDP-glucose 4-epimerase (exoB).